Here is a 185-residue protein sequence, read N- to C-terminus: Elongation factor P (185 aa).

This sequence belongs to the elongation factor P family.

Its subcellular location is the cytoplasm. It functions in the pathway protein biosynthesis; polypeptide chain elongation. Involved in peptide bond synthesis. Stimulates efficient translation and peptide-bond synthesis on native or reconstituted 70S ribosomes in vitro. Probably functions indirectly by altering the affinity of the ribosome for aminoacyl-tRNA, thus increasing their reactivity as acceptors for peptidyl transferase. This Picosynechococcus sp. (strain ATCC 27264 / PCC 7002 / PR-6) (Agmenellum quadruplicatum) protein is Elongation factor P.